Consider the following 180-residue polypeptide: Shikimate kinase (180 aa).

Residue 14–19 participates in ATP binding; the sequence is GAGKST. S18 provides a ligand contact to Mg(2+). Residues D36, R60, and G82 each coordinate substrate. R120 is an ATP binding site. R140 contributes to the substrate binding site. Q157 lines the ATP pocket.

This sequence belongs to the shikimate kinase family. In terms of assembly, monomer. Requires Mg(2+) as cofactor.

Its subcellular location is the cytoplasm. The catalysed reaction is shikimate + ATP = 3-phosphoshikimate + ADP + H(+). It participates in metabolic intermediate biosynthesis; chorismate biosynthesis; chorismate from D-erythrose 4-phosphate and phosphoenolpyruvate: step 5/7. In terms of biological role, catalyzes the specific phosphorylation of the 3-hydroxyl group of shikimic acid using ATP as a cosubstrate. The sequence is that of Shikimate kinase from Haemophilus influenzae (strain PittGG).